The primary structure comprises 160 residues: Nitrate reductase [NADH] (160 aa).

T37 lines the FAD pocket.

It belongs to the nitrate reductase family. In terms of assembly, homodimer. It depends on FAD as a cofactor. Heme is required as a cofactor. The cofactor is Mo-molybdopterin.

It catalyses the reaction nitrite + NAD(+) + H2O = nitrate + NADH + H(+). In terms of biological role, nitrate reductase is a key enzyme involved in the first step of nitrate assimilation in plants, fungi and bacteria. This chain is Nitrate reductase [NADH] (NIA), found in Lotus tetragonolobus (Winged pea).